A 494-amino-acid polypeptide reads, in one-letter code: Protein nucleotidyltransferase YdiU (494 aa).

Residues Gly99, Gly101, Arg102, Lys118, Asp130, Gly131, Arg181, and Arg188 each contribute to the ATP site. Asp261 acts as the Proton acceptor in catalysis. Residues Asn262 and Asp271 each coordinate Mg(2+). Asp271 serves as a coordination point for ATP.

It belongs to the SELO family. Mg(2+) serves as cofactor. It depends on Mn(2+) as a cofactor.

The enzyme catalyses L-seryl-[protein] + ATP = 3-O-(5'-adenylyl)-L-seryl-[protein] + diphosphate. It catalyses the reaction L-threonyl-[protein] + ATP = 3-O-(5'-adenylyl)-L-threonyl-[protein] + diphosphate. The catalysed reaction is L-tyrosyl-[protein] + ATP = O-(5'-adenylyl)-L-tyrosyl-[protein] + diphosphate. It carries out the reaction L-histidyl-[protein] + UTP = N(tele)-(5'-uridylyl)-L-histidyl-[protein] + diphosphate. The enzyme catalyses L-seryl-[protein] + UTP = O-(5'-uridylyl)-L-seryl-[protein] + diphosphate. It catalyses the reaction L-tyrosyl-[protein] + UTP = O-(5'-uridylyl)-L-tyrosyl-[protein] + diphosphate. Functionally, nucleotidyltransferase involved in the post-translational modification of proteins. It can catalyze the addition of adenosine monophosphate (AMP) or uridine monophosphate (UMP) to a protein, resulting in modifications known as AMPylation and UMPylation. This chain is Protein nucleotidyltransferase YdiU, found in Variovorax paradoxus (strain S110).